The primary structure comprises 374 residues: Eukaryotic translation initiation factor 3 subunit M (374 aa).

The residue at position 2 (serine 2) is an N-acetylserine. A phosphoserine mark is found at serine 2 and serine 152. In terms of domain architecture, PCI spans 180–339 (AASKVMVELL…RKVVVSHSTH (160 aa)). At lysine 254 the chain carries N6-acetyllysine. Positions 344–374 (KQQWQQLYDTLNAWKQNLNKVKNSLLSLSDT) are interaction with HSV-1 and HSV-2. Serine 367 carries the post-translational modification Phosphoserine.

In terms of assembly, component of the eukaryotic translation initiation factor 3 (eIF-3) complex, which is composed of 13 subunits: EIF3A, EIF3B, EIF3C, EIF3D, EIF3E, EIF3F, EIF3G, EIF3H, EIF3I, EIF3J, EIF3K, EIF3L and EIF3M. The eIF-3 complex appears to include 3 stable modules: module A is composed of EIF3A, EIF3B, EIF3G and EIF3I; module B is composed of EIF3F, EIF3H, and EIF3M; and module C is composed of EIF3C, EIF3D, EIF3E, EIF3K and EIF3L. EIF3C of module C binds EIF3B of module A and EIF3H of module B, thereby linking the three modules. EIF3J is a labile subunit that binds to the eIF-3 complex via EIF3B. The eIF-3 complex interacts with RPS6KB1 under conditions of nutrient depletion. Mitogenic stimulation leads to binding and activation of a complex composed of MTOR and RPTOR, leading to phosphorylation and release of RPS6KB1 and binding of EIF4B to eIF-3. In terms of tissue distribution, broadly expressed.

Its subcellular location is the cytoplasm. Its function is as follows. Component of the eukaryotic translation initiation factor 3 (eIF-3) complex, which is required for several steps in the initiation of protein synthesis. The eIF-3 complex associates with the 40S ribosome and facilitates the recruitment of eIF-1, eIF-1A, eIF-2:GTP:methionyl-tRNAi and eIF-5 to form the 43S pre-initiation complex (43S PIC). The eIF-3 complex stimulates mRNA recruitment to the 43S PIC and scanning of the mRNA for AUG recognition. The eIF-3 complex is also required for disassembly and recycling of post-termination ribosomal complexes and subsequently prevents premature joining of the 40S and 60S ribosomal subunits prior to initiation. The eIF-3 complex specifically targets and initiates translation of a subset of mRNAs involved in cell proliferation, including cell cycling, differentiation and apoptosis, and uses different modes of RNA stem-loop binding to exert either translational activation or repression. (Microbial infection) May favor virus entry in case of infection with herpes simplex virus 1 (HSV1) or herpes simplex virus 2 (HSV2). This chain is Eukaryotic translation initiation factor 3 subunit M, found in Homo sapiens (Human).